Reading from the N-terminus, the 81-residue chain is Photosystem I iron-sulfur center (81 aa).

4Fe-4S ferredoxin-type domains follow at residues 2 to 31 (AHSV…MVPW) and 39 to 68 (IASA…VRVY). Cysteine 11, cysteine 14, cysteine 17, cysteine 21, cysteine 48, cysteine 51, cysteine 54, and cysteine 58 together coordinate [4Fe-4S] cluster.

The eukaryotic PSI reaction center is composed of at least 11 subunits. The cofactor is [4Fe-4S] cluster.

Its subcellular location is the plastid. The protein localises to the chloroplast thylakoid membrane. It catalyses the reaction reduced [plastocyanin] + hnu + oxidized [2Fe-2S]-[ferredoxin] = oxidized [plastocyanin] + reduced [2Fe-2S]-[ferredoxin]. Functionally, apoprotein for the two 4Fe-4S centers FA and FB of photosystem I (PSI); essential for photochemical activity. FB is the terminal electron acceptor of PSI, donating electrons to ferredoxin. The C-terminus interacts with PsaA/B/D and helps assemble the protein into the PSI complex. Required for binding of PsaD and PsaE to PSI. PSI is a plastocyanin-ferredoxin oxidoreductase, converting photonic excitation into a charge separation, which transfers an electron from the donor P700 chlorophyll pair to the spectroscopically characterized acceptors A0, A1, FX, FA and FB in turn. The polypeptide is Photosystem I iron-sulfur center (Chlorokybus atmophyticus (Soil alga)).